Consider the following 134-residue polypeptide: Homeobox protein ceh-5 (134 aa).

A DNA-binding region (homeobox) is located at residues 35-94 (PKRPRTVFTDEQLEKLEESFNTSGYLSGSTRAKLAESLGLSDNQVKVWFQNRRTKQKKID).

Its subcellular location is the nucleus. This Caenorhabditis elegans protein is Homeobox protein ceh-5 (ceh-5).